A 364-amino-acid chain; its full sequence is MEGLLFNVNNGYIEGIVRGYRNSLLTSTNYTNMTQCESIDDLKLQLGPAYGDFLASLPPKPSTSALAAKTTDKLVSEFRYVRANAAGSLAKFMDYLTYGYMIDNVALLITGTLHERDTRELLERCHPLGWFETMPVLCVATNIEELYNSVMIETPLAPYFKSSLSLQDLDELNIEIVRNTLYKNYLEDFYHFVNTHPDMAGTPTAEVMSELLEFEADRRAINITLNSFGTELSKADRKKLYPNFGQLYPEGTLMLSRADDFEGVRLAVEGVADYKSFFDAAGLGGGPSGPGNMGGGGTEGKSLEDMFYQKEMEISKMAFTRQFTYAIVYAWVKLREQEIRNITWIAECIAQNQKERINNYISVF.

Belongs to the V-ATPase V0D/AC39 subunit family. V-ATPase is a heteromultimeric enzyme composed of a peripheral catalytic V1 complex (components A to H) attached to an integral membrane V0 proton pore complex (components: a, c, c', c'', d, e, f and VOA1).

Its subcellular location is the vacuole membrane. Subunit of the V0 complex of vacuolar(H+)-ATPase (V-ATPase), a multisubunit enzyme composed of a peripheral complex (V1) that hydrolyzes ATP and a membrane integral complex (V0) that translocates protons. V-ATPase is responsible for acidifying and maintaining the pH of intracellular compartments. This subunit is a non-integral membrane component of the membrane pore domain and is required for proper assembly of the V0 sector. Might be involved in the regulated assembly of V1 subunits onto the membrane sector or alternatively may prevent the passage of protons through V0 pores. The chain is V-type proton ATPase subunit d from Neurospora crassa (strain ATCC 24698 / 74-OR23-1A / CBS 708.71 / DSM 1257 / FGSC 987).